We begin with the raw amino-acid sequence, 243 residues long: ATP synthase subunit a (243 aa).

7 helical membrane-spanning segments follow: residues 29 to 49, 54 to 74, 89 to 109, 114 to 134, 144 to 164, 182 to 202, and 208 to 228; these read NASLFMVLSTLIISLFCYIGL, ILPNSMQLIIEAIYNFIVSTI, VFTIFTFIATCNLLGVLPLGF, HIAVTFAISMVVFISVTAIGF, ILLPKGTPGWLAPMMVFIELF, IAGHTIIKVIAGFVIKMNIFL, and AFIIILIGFEIFVAILQAYIF.

It belongs to the ATPase A chain family. F-type ATPases have 2 components, CF(1) - the catalytic core - and CF(0) - the membrane proton channel. CF(1) has five subunits: alpha(3), beta(3), gamma(1), delta(1), epsilon(1). CF(0) has three main subunits: a(1), b(2) and c(9-12). The alpha and beta chains form an alternating ring which encloses part of the gamma chain. CF(1) is attached to CF(0) by a central stalk formed by the gamma and epsilon chains, while a peripheral stalk is formed by the delta and b chains.

It localises to the cell inner membrane. Its function is as follows. Key component of the proton channel; it plays a direct role in the translocation of protons across the membrane. The protein is ATP synthase subunit a of Ehrlichia chaffeensis (strain ATCC CRL-10679 / Arkansas).